We begin with the raw amino-acid sequence, 76 residues long: Liver-expressed antimicrobial peptide 2 (76 aa).

An N-terminal signal peptide occupies residues 1–22; it reads MLQLKLFAVLLTCLLLLGQVNS. The propeptide occupies 23–36; the sequence is SPVPEVSSAKRSRR. Intrachain disulfides connect Cys53–Cys64 and Cys59–Cys69.

This sequence belongs to the LEAP2 family.

The protein resides in the secreted. Has an antimicrobial activity. The chain is Liver-expressed antimicrobial peptide 2 (Leap2) from Mus musculus (Mouse).